The following is a 297-amino-acid chain: Phosphatidylglycerol--prolipoprotein diacylglyceryl transferase (297 aa).

The next 4 helical transmembrane spans lie at Phe20–Ile40, Ile58–Glu78, Ile104–Ile124, and Ile133–Gly153. Residue Arg154 participates in a 1,2-diacyl-sn-glycero-3-phospho-(1'-sn-glycerol) binding. A run of 3 helical transmembrane segments spans residues Thr194 to Tyr214, Gly225 to Leu245, and Ala266 to Leu286.

The protein belongs to the Lgt family.

It is found in the cell inner membrane. The enzyme catalyses L-cysteinyl-[prolipoprotein] + a 1,2-diacyl-sn-glycero-3-phospho-(1'-sn-glycerol) = an S-1,2-diacyl-sn-glyceryl-L-cysteinyl-[prolipoprotein] + sn-glycerol 1-phosphate + H(+). It participates in protein modification; lipoprotein biosynthesis (diacylglyceryl transfer). Functionally, catalyzes the transfer of the diacylglyceryl group from phosphatidylglycerol to the sulfhydryl group of the N-terminal cysteine of a prolipoprotein, the first step in the formation of mature lipoproteins. This chain is Phosphatidylglycerol--prolipoprotein diacylglyceryl transferase, found in Prochlorococcus marinus subsp. pastoris (strain CCMP1986 / NIES-2087 / MED4).